Consider the following 356-residue polypeptide: NADH-quinone oxidoreductase subunit H (356 aa).

9 consecutive transmembrane segments (helical) span residues 17–37 (TGGILLVVIWVLLSLAFLLLA), 51–71 (PNVVGPFGLLQSFADFFKFVL), 83–103 (VVFILAPLISLILAFVGWAVV), 116–136 (VGILYLLAMSSLGVYGIIMGG), 162–182 (IGLIIITVILLAGSMNLSTIV), 202–222 (LVLLPVMVVAMGMFYISALAE), 261–281 (IVLMCAMISVLFFGGWNPGFP), 295–315 (LFLALVFYAKICFWFFMFAMA), and 334–354 (VFLPTSLVLVAAVAAWRVFGP).

The protein belongs to the complex I subunit 1 family. As to quaternary structure, NDH-1 is composed of 14 different subunits. Subunits NuoA, H, J, K, L, M, N constitute the membrane sector of the complex.

The protein resides in the cell inner membrane. It carries out the reaction a quinone + NADH + 5 H(+)(in) = a quinol + NAD(+) + 4 H(+)(out). Functionally, NDH-1 shuttles electrons from NADH, via FMN and iron-sulfur (Fe-S) centers, to quinones in the respiratory chain. The immediate electron acceptor for the enzyme in this species is believed to be ubiquinone. Couples the redox reaction to proton translocation (for every two electrons transferred, four hydrogen ions are translocated across the cytoplasmic membrane), and thus conserves the redox energy in a proton gradient. This subunit may bind ubiquinone. The polypeptide is NADH-quinone oxidoreductase subunit H (Caulobacter vibrioides (strain ATCC 19089 / CIP 103742 / CB 15) (Caulobacter crescentus)).